Consider the following 472-residue polypeptide: Threonine synthase-like 2 (472 aa).

At Lys113 the chain carries N6-(pyridoxal phosphate)lysine.

It belongs to the threonine synthase family. It depends on pyridoxal 5'-phosphate as a cofactor.

In terms of biological role, acts as a catabolic phospho-lyase on both gamma- and beta-phosphorylated substrates. Degrades O-phospho-threonine (PThr) to alpha-ketobutyrate, ammonia and phosphate. This is Threonine synthase-like 2 (thnsl2) from Xenopus laevis (African clawed frog).